We begin with the raw amino-acid sequence, 627 residues long: MKYILVTGGVISGVGKGVIASSFGTLLKSCGLDVTSIKIDPYINIDAGTFSPYEHGEVYVLDDGAEVDLDLGNYERFLDVTLHRDNNITTGKIYKLVIEKERTGEYLGKTVQVVPHITDAIQEWVERVAQTPVQGSSKPQVCIVELGGTIGDIEGMPFVEAFRQFQFRVKRENFCLAHVSLVPLPKATGEPKTKPTQSSVRELRGCGLSPDLIVCRSEKPIGLEVKEKISNFCHVGPDQVICIHDLNSIYHVPLLMEQNGVIEYLNERLQLNIDMSKRTKCLQQWRDLARRTETVRREVCIAVVGKYTKFTDSYASVVKALQHAALAVNRKLELVFIESCLLEEETLHSEPSKYHKEWQKLCDSHGILVPGGFGSRGMEGKIRACQWARENQKPLLGICLGLQAAVIEFARNKLGLKDANTTEIDPNTANALVIDMPEHHTGQLGGTMRLGKRITVFSDGPSVIRQLYGNPKSVQERHRHRYEVNPKYVHLLEEQGMRFVGTDVDKTRMEIIELSGHPYFVATQYHPEYLSRPLKPSPPFLGLILASVDRLNQYIQRGCRLSPRQLSDASSDEEDSVVGLAGATKSLSSLKIPITPTNGISKSCNGSISTSDSEGACGGVDPTNGHK.

Residues 300-554 enclose the Glutamine amidotransferase type-1 domain; that stretch reads CIAVVGKYTK…LASVDRLNQY (255 aa). Residues Cys399, His526, and Glu528 each act as for GATase activity in the active site. Phosphoserine is present on residues Ser567, Ser570, Ser571, and Ser588. Phosphothreonine is present on Thr595. Polar residues predominate over residues 599–613; that stretch reads GISKSCNGSISTSDS. The interval 599–627 is disordered; that stretch reads GISKSCNGSISTSDSEGACGGVDPTNGHK.

This sequence belongs to the CTP synthase family. In ovary, expressed in oocytes, follicle cells and nurse cells. Also expressed in larval and adult testis (at protein level). In larvae, expressed in lymph gland, salivary gland, regions of the midgut, testis, optical lobe and trachea. Isoform 1 is expressed in adult testis, ovary, accessory gland and head. Isoform 2 is weakly expressed in ovary.

It is found in the cytoplasm. It carries out the reaction UTP + L-glutamine + ATP + H2O = CTP + L-glutamate + ADP + phosphate + 2 H(+). It functions in the pathway pyrimidine metabolism; CTP biosynthesis via de novo pathway; CTP from UDP: step 2/2. In terms of biological role, catalyzes the ATP-dependent amination of UTP to CTP with either L-glutamine or ammonia as the source of nitrogen. Constitutes the rate-limiting enzyme in the synthesis of cytosine nucleotides. Its function is as follows. Required for assembly of cytoophidium in female germline cells. In nurse cells, CTPsyn filament assembly in the cytoophidium is regulated by Ack kinase which may thereby contribute to the control of CTP production at specific stages of oogenesis and development of the nurse cell membrane. The sequence is that of CTP synthase from Drosophila melanogaster (Fruit fly).